The primary structure comprises 217 residues: 3,4-dihydroxy-2-butanone 4-phosphate synthase (217 aa).

D-ribulose 5-phosphate-binding positions include 37-38 (RE), D42, 150-154 (RGGHT), and E174. E38 lines the Mg(2+) pocket. H153 serves as a coordination point for Mg(2+).

This sequence belongs to the DHBP synthase family. As to quaternary structure, homodimer. It depends on Mg(2+) as a cofactor. The cofactor is Mn(2+).

The enzyme catalyses D-ribulose 5-phosphate = (2S)-2-hydroxy-3-oxobutyl phosphate + formate + H(+). Its pathway is cofactor biosynthesis; riboflavin biosynthesis; 2-hydroxy-3-oxobutyl phosphate from D-ribulose 5-phosphate: step 1/1. Catalyzes the conversion of D-ribulose 5-phosphate to formate and 3,4-dihydroxy-2-butanone 4-phosphate. In Enterobacter sp. (strain 638), this protein is 3,4-dihydroxy-2-butanone 4-phosphate synthase.